The primary structure comprises 340 residues: MIVRPVTSADLPALIELARSTGTGLTTLPANEQRLQHRVSWAEKAFRGEAERGDADYLFVLEDDAGKVVGISAIAGAVGLREPWYNYRVGLTVSASQELNIHREIPTLFLANDLTGNSELCSLFLHADHRSGLNGKLLSRARFLFIAEFRHLFGDKLIAEMRGMSDEEGRSPFWESLGRHFFKMEFSQADYLTGVGNKAFIAELMPKFPLYTCFLSEEARGVIGRVHPNTEPALAMLKAEGFSYQGYVDIFDAGPAIEAETDKIRAIAESQNLVLAVGTPGDDAEPYLIHNRKREDCRITAAPARAAAGTLVVDPLTAKRLRLSAGASVRAVPLSAQKRG.

It belongs to the succinylarginine dihydrolase family. Heterotetramer of two alpha and two beta subunits.

The catalysed reaction is succinyl-CoA + L-arginine = N(2)-succinyl-L-arginine + CoA + H(+). It participates in amino-acid degradation; L-arginine degradation via AST pathway; L-glutamate and succinate from L-arginine: step 1/5. The chain is Arginine N-succinyltransferase subunit beta (aruG) from Pseudomonas aeruginosa (strain ATCC 15692 / DSM 22644 / CIP 104116 / JCM 14847 / LMG 12228 / 1C / PRS 101 / PAO1).